The primary structure comprises 239 residues: Beta-glucanase (239 aa).

The signal sequence occupies residues 1 to 25 (MKRVLLILVTGLFMSLCGITSSVSA). The GH16 domain occupies 26–239 (QTGGSFFEPF…HYDWMRYRKK (214 aa)). Residues Cys57 and Cys86 are joined by a disulfide bond. Glu134 acts as the Nucleophile in catalysis.

This sequence belongs to the glycosyl hydrolase 16 family.

It catalyses the reaction Hydrolysis of (1-&gt;4)-beta-D-glucosidic linkages in beta-D-glucans containing (1-&gt;3)- and (1-&gt;4)-bonds.. The polypeptide is Beta-glucanase (bglA) (Bacillus amyloliquefaciens (Bacillus velezensis)).